The chain runs to 435 residues: Serine/threonine-protein kinase 40 (435 aa).

The region spanning 35-332 (FILGPRLGNS…DVLEALSAII (298 aa)) is the Protein kinase domain. Residues 41 to 49 (LGNSPVPSI) and K66 contribute to the ATP site. D197 serves as the catalytic Proton acceptor.

The protein belongs to the protein kinase superfamily. CAMK Ser/Thr protein kinase family.

The protein resides in the nucleus. Its subcellular location is the cytoplasm. It carries out the reaction L-seryl-[protein] + ATP = O-phospho-L-seryl-[protein] + ADP + H(+). The enzyme catalyses L-threonyl-[protein] + ATP = O-phospho-L-threonyl-[protein] + ADP + H(+). In terms of biological role, may be a negative regulator of NF-kappa-B and p53-mediated gene transcription. The sequence is that of Serine/threonine-protein kinase 40 (Stk40) from Rattus norvegicus (Rat).